A 541-amino-acid polypeptide reads, in one-letter code: Chlorophyllide a oxygenase, chloroplastic (541 aa).

A coiled-coil region spans residues 114 to 151 (LAREFKSIGTLRKELAELQEELAKAHNQVHLSETRVSS). Polar residues predominate over residues 178 to 192 (AECTSLAPSTSSASR). The interval 178-208 (AECTSLAPSTSSASRVVNKKPPRRSLNVSGP) is disordered. One can recognise a Rieske domain in the interval 220–320 (WYPVAFSSDL…CFEQEGMVWI (101 aa)). 4 residues coordinate [2Fe-2S] cluster: C261, H263, C280, and H283. Residues D359, D363, H366, and H371 each coordinate Fe cation.

As to expression, expressed in leaves and germinating seedlings, but not in sheaths and roots.

Its subcellular location is the plastid. It localises to the chloroplast membrane. It is found in the chloroplast thylakoid membrane. It carries out the reaction chlorophyllide a + 2 NADPH + 2 O2 + 2 H(+) = chlorophyllide b + 2 NADP(+) + 3 H2O. Its function is as follows. Catalyzes a two-step oxygenase reaction involved in the synthesis of chlorophyll b. Acts specifically on the non-esterified chlorophyllide a and not on chlorophyll a. This Oryza sativa subsp. japonica (Rice) protein is Chlorophyllide a oxygenase, chloroplastic (CAO).